Consider the following 366-residue polypeptide: Chorismate synthase (366 aa).

Positions 48 and 54 each coordinate NADP(+). Residues 125–127 (RSS), 238–239 (NA), Gly278, 293–297 (KPTSS), and Arg319 contribute to the FMN site.

The protein belongs to the chorismate synthase family. Homotetramer. FMNH2 is required as a cofactor.

It carries out the reaction 5-O-(1-carboxyvinyl)-3-phosphoshikimate = chorismate + phosphate. It functions in the pathway metabolic intermediate biosynthesis; chorismate biosynthesis; chorismate from D-erythrose 4-phosphate and phosphoenolpyruvate: step 7/7. Functionally, catalyzes the anti-1,4-elimination of the C-3 phosphate and the C-6 proR hydrogen from 5-enolpyruvylshikimate-3-phosphate (EPSP) to yield chorismate, which is the branch point compound that serves as the starting substrate for the three terminal pathways of aromatic amino acid biosynthesis. This reaction introduces a second double bond into the aromatic ring system. The polypeptide is Chorismate synthase (Burkholderia ambifaria (strain ATCC BAA-244 / DSM 16087 / CCUG 44356 / LMG 19182 / AMMD) (Burkholderia cepacia (strain AMMD))).